The chain runs to 499 residues: Trichothecene C-4 hydroxylase (499 aa).

Residues 7–29 (VGVAVQLVLTVLLASIPLRVIWN) traverse the membrane as a helical segment. Asn173 and Asn287 each carry an N-linked (GlcNAc...) asparagine glycan. Residue Cys442 participates in heme binding. Residue Asn473 is glycosylated (N-linked (GlcNAc...) asparagine).

The protein belongs to the cytochrome P450 family. Requires heme as cofactor.

The protein localises to the membrane. The protein operates within sesquiterpene biosynthesis; trichothecene biosynthesis. In terms of biological role, trichothecene C-4 hydroxylase; part of the gene cluster that mediates the production of the antimicrobial trichothecene harzianum A (HA) that plays a role in Botrytis cinerea antagonistic activity and plant defense priming. The biosynthesis of harzianum A begins with the cyclization of farnesyl diphosphate to trichodiene and is catalyzed by the trichodiene synthase TRI5. Trichodiene undergoes a series of oxygenations catalyzed by the cytochrome P450 monooxygenase TRI4. TRI4 controls the addition of 3 oxygens at C-2, C-11, and the C-12, C-13-epoxide to form the intermediate isotrichodiol. Isotrichodiol then undergoes a non-enzymatic isomerization and cyclization to form 12,13-epoxytrichothec-9-ene (EPT) which is further converted to trichodermol by the cytochrome P450 monooxygenase TRI11 via C-4 hydroxylation. The last step of HA synthesis is esterification of an octatriendioyl moiety to the C-4 oxygen of trichodermol. The octatriendioyl moiety is probably produced by the polyketide synthase TRI17 and the esterification performed by the trichothecene O-acetyltransferase TRI3. This chain is Trichothecene C-4 hydroxylase, found in Trichoderma arundinaceum.